We begin with the raw amino-acid sequence, 214 residues long: EEF1A lysine methyltransferase 1 (214 aa).

Ser-2 carries the post-translational modification N-acetylserine. Ser-2 is modified (phosphoserine).

Belongs to the class I-like SAM-binding methyltransferase superfamily. EFM5 family.

It localises to the cytoplasm. It carries out the reaction L-lysyl-[protein] + 3 S-adenosyl-L-methionine = N(6),N(6),N(6)-trimethyl-L-lysyl-[protein] + 3 S-adenosyl-L-homocysteine + 3 H(+). In terms of biological role, protein N-lysine methyltransferase that selectively catalyzes the trimethylation of EEF1A at 'Lys-79'. This chain is EEF1A lysine methyltransferase 1, found in Homo sapiens (Human).